The primary structure comprises 450 residues: Tubulin alpha chain (450 aa).

Q11 lines the GTP pocket. K40 carries the post-translational modification N6-acetyllysine. GTP-binding residues include E71, S140, G144, T145, T179, N206, and N228. E71 contributes to the Mg(2+) binding site. The active site involves E254.

Belongs to the tubulin family. As to quaternary structure, dimer of alpha and beta chains. A typical microtubule is a hollow water-filled tube with an outer diameter of 25 nm and an inner diameter of 15 nM. Alpha-beta heterodimers associate head-to-tail to form protofilaments running lengthwise along the microtubule wall with the beta-tubulin subunit facing the microtubule plus end conferring a structural polarity. Microtubules usually have 13 protofilaments but different protofilament numbers can be found in some organisms and specialized cells. Mg(2+) serves as cofactor. Post-translationally, acetylation of alpha chains at Lys-40 stabilizes microtubules and affects affinity and processivity of microtubule motors. This modification has a role in multiple cellular functions, ranging from cell motility, cell cycle progression or cell differentiation to intracellular trafficking and signaling.

It localises to the cytoplasm. Its subcellular location is the cytoskeleton. The catalysed reaction is GTP + H2O = GDP + phosphate + H(+). Tubulin is the major constituent of microtubules, a cylinder consisting of laterally associated linear protofilaments composed of alpha- and beta-tubulin heterodimers. Microtubules grow by the addition of GTP-tubulin dimers to the microtubule end, where a stabilizing cap forms. Below the cap, tubulin dimers are in GDP-bound state, owing to GTPase activity of alpha-tubulin. The polypeptide is Tubulin alpha chain (Euplotoides octocarinatus (Freshwater ciliate)).